An 874-amino-acid polypeptide reads, in one-letter code: Alanine--tRNA ligase (874 aa).

Zn(2+)-binding residues include histidine 564, histidine 568, cysteine 666, and histidine 670.

This sequence belongs to the class-II aminoacyl-tRNA synthetase family. Zn(2+) is required as a cofactor.

The protein localises to the cytoplasm. It carries out the reaction tRNA(Ala) + L-alanine + ATP = L-alanyl-tRNA(Ala) + AMP + diphosphate. In terms of biological role, catalyzes the attachment of alanine to tRNA(Ala) in a two-step reaction: alanine is first activated by ATP to form Ala-AMP and then transferred to the acceptor end of tRNA(Ala). Also edits incorrectly charged Ser-tRNA(Ala) and Gly-tRNA(Ala) via its editing domain. The polypeptide is Alanine--tRNA ligase (Carboxydothermus hydrogenoformans (strain ATCC BAA-161 / DSM 6008 / Z-2901)).